The following is a 280-amino-acid chain: Protein synthesis inhibitor II (280 aa).

The residue at position 1 (Ala1) is an N-acetylalanine. The active site involves Glu174.

This sequence belongs to the ribosome-inactivating protein family. Type 1 RIP subfamily.

It localises to the cytoplasm. It carries out the reaction Endohydrolysis of the N-glycosidic bond at one specific adenosine on the 28S rRNA.. Inhibits the elongation phase of protein synthesis. It inactivates fungal ribosomes even more effectively than mammalian ribosomes and is thought to function as a constitutive antifungal agent in plants. The protein is Protein synthesis inhibitor II (RIP30A) of Hordeum vulgare (Barley).